The sequence spans 171 residues: Small ribosomal subunit protein uS5 (171 aa).

The region spanning 15–78 (LEEKVVKINR…EKAKKQLVRI (64 aa)) is the S5 DRBM domain.

It belongs to the universal ribosomal protein uS5 family. Part of the 30S ribosomal subunit. Contacts proteins S4 and S8.

In terms of biological role, with S4 and S12 plays an important role in translational accuracy. Its function is as follows. Located at the back of the 30S subunit body where it stabilizes the conformation of the head with respect to the body. This is Small ribosomal subunit protein uS5 from Onion yellows phytoplasma (strain OY-M).